A 152-amino-acid chain; its full sequence is MNKRRANGSSHSTRPVRTGSPKWVRFSREEVEMLIEELAKKGYTPSMIGIVLRDQYGIPLAKPIIGKKVNQFLKDKGLASQIPEDLFNLIRRAVNVRRHLNEYPGDKTAKKGLEEIESKIRRLSRYYKRVEKLPQDWTYDPAKAELLVSASS.

Residues 1–20 (MNKRRANGSSHSTRPVRTGS) are disordered.

The protein belongs to the universal ribosomal protein uS15 family. As to quaternary structure, part of the 30S ribosomal subunit.

This is Small ribosomal subunit protein uS15 from Metallosphaera sedula (strain ATCC 51363 / DSM 5348 / JCM 9185 / NBRC 15509 / TH2).